Reading from the N-terminus, the 229-residue chain is Aminodeoxyfutalosine nucleosidase (229 aa).

Glutamate 13 functions as the Proton acceptor in the catalytic mechanism. Residues glycine 79, isoleucine 153, and 173–174 (ME) each bind substrate. Aspartate 197 functions as the Proton donor in the catalytic mechanism.

Belongs to the PNP/UDP phosphorylase family. As to quaternary structure, homodimer.

The enzyme catalyses 6-amino-6-deoxyfutalosine + H2O = dehypoxanthine futalosine + adenine. It carries out the reaction S-adenosyl-L-homocysteine + H2O = S-(5-deoxy-D-ribos-5-yl)-L-homocysteine + adenine. It catalyses the reaction S-methyl-5'-thioadenosine + H2O = 5-(methylsulfanyl)-D-ribose + adenine. The catalysed reaction is 5'-deoxyadenosine + H2O = 5-deoxy-D-ribose + adenine. It participates in quinol/quinone metabolism; menaquinone biosynthesis. It functions in the pathway amino-acid biosynthesis; L-methionine biosynthesis via salvage pathway; S-methyl-5-thio-alpha-D-ribose 1-phosphate from S-methyl-5'-thioadenosine (hydrolase route): step 1/2. Functionally, catalyzes the direct conversion of aminodeoxyfutalosine (AFL) into dehypoxanthine futalosine (DHFL) and adenine via the hydrolysis of the N-glycosidic bond; this reaction seems to represent an essential step in the menaquinone biosynthesis pathway in Campylobacter species. Also catalyzes the hydrolysis of 5'-methylthioadenosine (MTA) to adenine and 5'-methylthioribose. Can also probably use S-adenosylhomocysteine (SAH) as substrate, leading to adenine and S-ribosylhomocysteine. These other activities highlight the tremendous versatility of the enzyme, which also plays key roles in S-adenosylmethionine recycling and in the biosynthesis of the quorum-sensing molecule autoinducer-2. Shows negligible activity with futalosine (FL) as substrate. This is Aminodeoxyfutalosine nucleosidase (pfs) from Campylobacter jejuni subsp. jejuni serotype O:2 (strain ATCC 700819 / NCTC 11168).